The primary structure comprises 232 residues: Esterase YpfH (232 aa).

Catalysis depends on charge relay system residues Ser111, Asp159, and His191.

Belongs to the AB hydrolase superfamily. AB hydrolase 2 family.

In terms of biological role, displays esterase activity toward palmitoyl-CoA and pNP-butyrate. The sequence is that of Esterase YpfH (ypfH) from Escherichia coli (strain K12).